Consider the following 618-residue polypeptide: UvrABC system protein C (618 aa).

The GIY-YIG domain maps to 13-92; sequence DKPGVYLMKN…IKKYRPKYNI (80 aa). In terms of domain architecture, UVR spans 204-239; it reads LDIVENFKLNMEKAAENLEFEKAAMLRDKINIIEKI.

The protein belongs to the UvrC family. In terms of assembly, interacts with UvrB in an incision complex.

It localises to the cytoplasm. Its function is as follows. The UvrABC repair system catalyzes the recognition and processing of DNA lesions. UvrC both incises the 5' and 3' sides of the lesion. The N-terminal half is responsible for the 3' incision and the C-terminal half is responsible for the 5' incision. This chain is UvrABC system protein C, found in Clostridium botulinum (strain Loch Maree / Type A3).